The primary structure comprises 397 residues: Acetate kinase (397 aa).

Residue N7 participates in Mg(2+) binding. ATP is bound at residue K14. R90 provides a ligand contact to substrate. Catalysis depends on D147, which acts as the Proton donor/acceptor. Residues 207–211, 282–284, and 330–334 contribute to the ATP site; these read HLGNG, DFR, and GIGEN. A Mg(2+)-binding site is contributed by E384.

It belongs to the acetokinase family. In terms of assembly, homodimer. Requires Mg(2+) as cofactor. Mn(2+) is required as a cofactor.

Its subcellular location is the cytoplasm. The catalysed reaction is acetate + ATP = acetyl phosphate + ADP. Its pathway is metabolic intermediate biosynthesis; acetyl-CoA biosynthesis; acetyl-CoA from acetate: step 1/2. Catalyzes the formation of acetyl phosphate from acetate and ATP. Can also catalyze the reverse reaction. This chain is Acetate kinase, found in Agathobacter rectalis (strain ATCC 33656 / DSM 3377 / JCM 17463 / KCTC 5835 / VPI 0990) (Eubacterium rectale).